The following is a 61-amino-acid chain: Photosystem II reaction center protein Z (61 aa).

Helical transmembrane passes span A8–S28 and L41–K61.

This sequence belongs to the PsbZ family. As to quaternary structure, PSII is composed of 1 copy each of membrane proteins PsbA, PsbB, PsbC, PsbD, PsbE, PsbF, PsbH, PsbI, PsbJ, PsbK, PsbL, PsbM, PsbT, PsbX, PsbY, PsbZ, Psb30/Ycf12, peripheral proteins PsbO, CyanoQ (PsbQ), PsbU, PsbV and a large number of cofactors. It forms dimeric complexes.

The protein resides in the cellular thylakoid membrane. Functionally, may control the interaction of photosystem II (PSII) cores with the light-harvesting antenna, regulates electron flow through the 2 photosystem reaction centers. PSII is a light-driven water plastoquinone oxidoreductase, using light energy to abstract electrons from H(2)O, generating a proton gradient subsequently used for ATP formation. The sequence is that of Photosystem II reaction center protein Z from Synechococcus sp. (strain JA-3-3Ab) (Cyanobacteria bacterium Yellowstone A-Prime).